A 1125-amino-acid polypeptide reads, in one-letter code: MAQAGRSGDAFASLDQRRERQEEQAQSGLDKVFYFQGVVELFNRMKIAYGRTPAWTALMKCNAIYLKDFKTAVGVEGTRYGLFFAEEVTKPTWSPDIGANLITLGEKACLDAQNAKYERLQASLKTTSGLVHQVMEKTREAKENLEKANKIQEQLDKVIESNKALHRKIQERNREKMQEYMVRLHNTQKDRDDWVQRCSRLEQENVTLQKRLKEKENALVSVGWDLLGWIVISVLVFGLISLADAQNLTPPAKIVITPGQAEFMDLAKLEKIQVRKYRLDSCELPPEKGCVLYKDYLTTRPVSFLELMAKCSKPDWVSESSYNETTLMEECIQIFGAEWCEGKLVDLVPRKCGEQHVLVNIIEQIEKTREVVTLIYGKVMSYRLDMWITSIFSLVLAGNKEKLFKMAPFIFVAWFLNIPVFLTCVAVNIFPVVSLPFILFQIFMPQFVLVNAFLLWLTLTLTAFYWSEGPKILMEISYALVYTIGFVLWSLGLAVGVTLKLTMVHQILMFCVVAAAICGTKFACTTITVQHPDGTTAKYTRVGKLKNNVVNQCKKVVTTLQTRGVIPATPAKTASIVIVEGKNGTGVGFRFMNYILTAEHVVQGSDIATLKNGSVSVKSKVIKTIPIFESVDNVAVLKLPPELNSVKPIKLAKKVQSDYLTLTAYDPNFQHAATFTGWCIIDGNWLNNSFDTKFGNSGAPYCDHDGRLVGIHLGTQGVLSQGIVIVDALKNTFQLADQCRPQNFDMDEFLEKVIAGTKVSHAAILKELEELREEVQFLKKKCVTYDDYWLCQTIFGQAKGKTKKTVRGRKHLVTKRALGKGHFMKMRMLTDEEYQNMIEKGFSAEEIREAVNALREQAWLNYCIDNDVDDEGEEDWYDDMVETDRVNQEIDEAIERAMEDRGEFYQKKSRLTFVEQAMMHLIQVSKERSQTAKLEVQKENEAQLVKMFERCVTDENTPEGTTSIAALSTEDDVRLVEGKVIDFTKAKNIPVDGEIRREIIPGTKCTEISTGPENKKNILKKKDTHIAEGKVETKSSQQPVDVKDDKPVALEQRKPRACKWCGSSQKHDYRECRFQREKRFCVYCAAMHSMFEGHIRPIECTSCKKSFSGIEKLEDHVVSGECQKN.

The stretch at 131 to 218 (VHQVMEKTRE…QKRLKEKENA (88 aa)) forms a coiled coil. 6 helical membrane passes run 220–240 (VSVGWDLLGWIVISVLVFGLI), 379–398 (VMSYRLDMWITSIFSLVLAG), 407–427 (APFIFVAWFLNIPVFLTCVAV), 437–457 (FILFQIFMPQFVLVNAFLLWL), 479–499 (ALVYTIGFVLWSLGLAVGVTL), and 507–527 (ILMFCVVAAAICGTKFACTTI). Catalysis depends on charge relay system; for serine protease activity residues His600, Asp632, and Ser697. Tyr834 is modified (O-(5'-phospho-RNA)-tyrosine).

Belongs to the astroviridae polyprotein 1A family. As to quaternary structure, monomer. In terms of processing, cleaved by the viral and host proteases. The protease is probably autocatalytically cleaved.

It is found in the host membrane. It catalyses the reaction RNA(n) + a ribonucleoside 5'-triphosphate = RNA(n+1) + diphosphate. Responsible for the cleavage of the polyprotein into functional products. In terms of biological role, protein covalently attached to the 5' extremity of the genomic and subgenomic RNAs. It may serve as a primer for the replicase. The sequence is that of Non-structural polyprotein 1A (ORF1) from Turkey astrovirus 2 (TAstV-2).